The sequence spans 579 residues: Sulfite reductase [NADPH] hemoprotein beta-component (579 aa).

Cysteine 434, cysteine 440, cysteine 479, and cysteine 483 together coordinate [4Fe-4S] cluster. Cysteine 483 provides a ligand contact to siroheme.

The protein belongs to the nitrite and sulfite reductase 4Fe-4S domain family. As to quaternary structure, alpha(8)-beta(8). The alpha component is a flavoprotein, the beta component is a hemoprotein. The cofactor is siroheme. Requires [4Fe-4S] cluster as cofactor.

The enzyme catalyses hydrogen sulfide + 3 NADP(+) + 3 H2O = sulfite + 3 NADPH + 4 H(+). Its pathway is sulfur metabolism; hydrogen sulfide biosynthesis; hydrogen sulfide from sulfite (NADPH route): step 1/1. Component of the sulfite reductase complex that catalyzes the 6-electron reduction of sulfite to sulfide. This is one of several activities required for the biosynthesis of L-cysteine from sulfate. The protein is Sulfite reductase [NADPH] hemoprotein beta-component of Salmonella choleraesuis (strain SC-B67).